We begin with the raw amino-acid sequence, 288 residues long: 4-diphosphocytidyl-2-C-methyl-D-erythritol kinase (288 aa).

Lysine 13 is a catalytic residue. 97–107 (PMGGGIGGGSS) serves as a coordination point for ATP. The active site involves aspartate 139.

The protein belongs to the GHMP kinase family. IspE subfamily.

It carries out the reaction 4-CDP-2-C-methyl-D-erythritol + ATP = 4-CDP-2-C-methyl-D-erythritol 2-phosphate + ADP + H(+). Its pathway is isoprenoid biosynthesis; isopentenyl diphosphate biosynthesis via DXP pathway; isopentenyl diphosphate from 1-deoxy-D-xylulose 5-phosphate: step 3/6. Catalyzes the phosphorylation of the position 2 hydroxy group of 4-diphosphocytidyl-2C-methyl-D-erythritol. The sequence is that of 4-diphosphocytidyl-2-C-methyl-D-erythritol kinase from Saccharophagus degradans (strain 2-40 / ATCC 43961 / DSM 17024).